The primary structure comprises 182 residues: Ribosome maturation factor RimM (182 aa).

In terms of domain architecture, PRC barrel spans 103-182; it reads EDEFYWRELF…RIEVDWDPGF (80 aa).

It belongs to the RimM family. Binds ribosomal protein uS19.

The protein localises to the cytoplasm. Functionally, an accessory protein needed during the final step in the assembly of 30S ribosomal subunit, possibly for assembly of the head region. Essential for efficient processing of 16S rRNA. May be needed both before and after RbfA during the maturation of 16S rRNA. It has affinity for free ribosomal 30S subunits but not for 70S ribosomes. This chain is Ribosome maturation factor RimM, found in Vibrio campbellii (strain ATCC BAA-1116).